The sequence spans 151 residues: S-protein homolog 74 (151 aa).

Positions 1 to 25 (MNYIKQFILAICFYLVLTCQDHVLA) are cleaved as a signal peptide.

It belongs to the plant self-incompatibility (S1) protein family.

Its subcellular location is the secreted. In Arabidopsis thaliana (Mouse-ear cress), this protein is S-protein homolog 74.